Reading from the N-terminus, the 629-residue chain is MDSVLRQSKAVCPFMKKATASSLRAMTTAARPAASPCGGAISKLQVLAHRCPVMGKAMAVQSARTGGRASAAPASFVHKAKLHTGRPREAQAVEGVFTGQKAGLPPHPPVKPTTATAANPSPAACTVSGNFGTKFNYEKFYENELEKKHKDKSYRYFNNINRLAKDFPRAHMATKEEKVAVWCANDYLGMGRNKHVLEAMHTTLDEYGAGAGGTRNISGHNKHAVELENSLAKLHATDAALVFSSCYVANDATLATLGSKLPDCVILSDSLNHASMIQGIRHSGAKKIIFKHNDVEDLEKKLAALPLHIPKIIAFESVYSMCGSIGPIEKFCDLAEKYGAITFNDEVHAVGMYGPHGAGVAEHLDWEAHQRGETKGTIADRIDIYSGTLGKAYGCVGGYIAGSAKLVDTIRSLAPGFIFTTTLPPAVMAGARAAIEYQMSYDGDRRLQQLHTRAVKEALADRDIPVIPNPSHIIPILVGNAELAKKASDKLLNDHQIYVQSINYPTVPVGQERLRITPTPGHTKQFRDHLVAALDSIWTELGIKRTSDWAAEGGFIGVGEAEAEPVAPLWTDEQLGIADAVAELRAQASDEKKGVINQLLESVALEQEREALNAAEEVADAAKAAAASA.

The transit peptide at 1–69 (MDSVLRQSKA…VQSARTGGRA (69 aa)) directs the protein to the mitochondrion. Substrate-binding residues include Arg155, Ser268, and Lys287. Residues Ser320, His348, and Thr388 each coordinate pyridoxal 5'-phosphate. Lys391 is a catalytic residue. The residue at position 391 (Lys391) is an N6-(pyridoxal phosphate)lysine. Positions 420 and 421 each coordinate pyridoxal 5'-phosphate. A substrate-binding site is contributed by Thr506.

The protein belongs to the class-II pyridoxal-phosphate-dependent aminotransferase family. As to quaternary structure, homodimer. Pyridoxal 5'-phosphate is required as a cofactor.

The protein localises to the mitochondrion matrix. The catalysed reaction is succinyl-CoA + glycine + H(+) = 5-aminolevulinate + CO2 + CoA. The protein operates within porphyrin-containing compound metabolism; protoporphyrin-IX biosynthesis; 5-aminolevulinate from glycine: step 1/1. Functionally, catalyzes the synthesis of 5-aminolevulinate (ALA) from succinyl-CoA and glycine, the first and rate-limiting step in heme biosynthesis. The chain is 5-aminolevulinate synthase, mitochondrial (alv-1) from Neurospora crassa (strain ATCC 24698 / 74-OR23-1A / CBS 708.71 / DSM 1257 / FGSC 987).